Consider the following 591-residue polypeptide: Transcription factor COE1-A (591 aa).

Positions 63–66 (RKSN) are interaction with DNA. A C5-type zinc finger spans residues 151-170 (CRVLLTHEIMCSRCCDKKSC). 2 interaction with DNA regions span residues 197–204 (NCLKNAGN) and 236–239 (NNSK). Residues 262–344 (PCIKAISPSE…CKGTPGRFIY (83 aa)) enclose the IPT/TIG domain. Over residues 454–466 (ANQGFSRNTSSVS) the composition is skewed to polar residues. The disordered stretch occupies residues 454 to 484 (ANQGFSRNTSSVSPHGYVPSTTPQQSSYSTV). Positions 471–484 (VPSTTPQQSSYSTV) are enriched in low complexity.

It belongs to the COE family. As to quaternary structure, forms either a homodimer or a heterodimer with a related family member. Detected in B cells.

It is found in the nucleus. In terms of biological role, transcriptional activator. The polypeptide is Transcription factor COE1-A (Danio rerio (Zebrafish)).